A 245-amino-acid polypeptide reads, in one-letter code: tRNA1(Val) (adenine(37)-N6)-methyltransferase (245 aa).

It belongs to the methyltransferase superfamily. tRNA (adenine-N(6)-)-methyltransferase family.

The protein resides in the cytoplasm. The catalysed reaction is adenosine(37) in tRNA1(Val) + S-adenosyl-L-methionine = N(6)-methyladenosine(37) in tRNA1(Val) + S-adenosyl-L-homocysteine + H(+). Functionally, specifically methylates the adenine in position 37 of tRNA(1)(Val) (anticodon cmo5UAC). This is tRNA1(Val) (adenine(37)-N6)-methyltransferase from Escherichia coli O7:K1 (strain IAI39 / ExPEC).